The primary structure comprises 149 residues: Pleckstrin homology domain-containing family J member 1 (149 aa).

The region spanning 15-108 (RAEKAAELSM…WVEALTNASY (94 aa)) is the PH domain.

The chain is Pleckstrin homology domain-containing family J member 1 (plekhj1) from Xenopus tropicalis (Western clawed frog).